A 357-amino-acid chain; its full sequence is Probable protein phosphatase 2C 60 (357 aa).

The 307-residue stretch at arginine 23 to phenylalanine 329 folds into the PPM-type phosphatase domain. The Mn(2+) site is built by aspartate 57, glycine 58, aspartate 272, and aspartate 320. The segment at asparagine 331 to asparagine 357 is disordered. The span at glycine 348–asparagine 357 shows a compositional bias: basic and acidic residues.

Belongs to the PP2C family. Mg(2+) serves as cofactor. The cofactor is Mn(2+).

It catalyses the reaction O-phospho-L-seryl-[protein] + H2O = L-seryl-[protein] + phosphate. It carries out the reaction O-phospho-L-threonyl-[protein] + H2O = L-threonyl-[protein] + phosphate. This chain is Probable protein phosphatase 2C 60, found in Arabidopsis thaliana (Mouse-ear cress).